A 151-amino-acid chain; its full sequence is Differentiation-associated protein 2 (151 aa).

The signal sequence occupies residues 1 to 22 (MKQIIRLITTLLLLSLIGITCA).

The protein resides in the endoplasmic reticulum. The protein localises to the vacuole. Its function is as follows. Has an essential role in the initiation of differentiation. Also required for cAMP signaling. The protein is Differentiation-associated protein 2 (dia2) of Dictyostelium discoideum (Social amoeba).